The sequence spans 272 residues: Undecaprenyl-diphosphatase (272 aa).

Helical transmembrane passes span 39–59, 87–107, 113–133, 145–165, 188–208, 220–240, and 251–271; these read SGLTFDVALHFGTFLAIFVYF, WMIVLASIPAAIAGKTLEQPI, SSPLMIALMLILFGLGLGLTD, ITLGTAMLVGCFQCLALVPGV, FSFLLSLPIVFGAALLKGLHL, PMLVGVAVSAVVGYISVAFLL, and FVWYRVAAGIGVMALLGVGLL.

It belongs to the UppP family.

The protein resides in the cell inner membrane. The enzyme catalyses di-trans,octa-cis-undecaprenyl diphosphate + H2O = di-trans,octa-cis-undecaprenyl phosphate + phosphate + H(+). Its function is as follows. Catalyzes the dephosphorylation of undecaprenyl diphosphate (UPP). Confers resistance to bacitracin. The chain is Undecaprenyl-diphosphatase from Trichlorobacter lovleyi (strain ATCC BAA-1151 / DSM 17278 / SZ) (Geobacter lovleyi).